Reading from the N-terminus, the 258-residue chain is Tryptophan synthase alpha chain (258 aa).

Residues Glu52 and Asp63 each act as proton acceptor in the active site.

This sequence belongs to the TrpA family. Tetramer of two alpha and two beta chains.

The enzyme catalyses (1S,2R)-1-C-(indol-3-yl)glycerol 3-phosphate + L-serine = D-glyceraldehyde 3-phosphate + L-tryptophan + H2O. It functions in the pathway amino-acid biosynthesis; L-tryptophan biosynthesis; L-tryptophan from chorismate: step 5/5. The alpha subunit is responsible for the aldol cleavage of indoleglycerol phosphate to indole and glyceraldehyde 3-phosphate. The protein is Tryptophan synthase alpha chain of Streptococcus pneumoniae serotype 19F (strain G54).